The sequence spans 57 residues: Small ribosomal subunit protein bS21 (57 aa).

The interval 31-57 is disordered; the sequence is EVRKRKHYEKPSVRRKKKSEAARKRKF. The segment covering 33 to 57 has biased composition (basic residues); sequence RKRKHYEKPSVRRKKKSEAARKRKF.

It belongs to the bacterial ribosomal protein bS21 family.

The sequence is that of Small ribosomal subunit protein bS21 (rpsU) from Halalkalibacterium halodurans (strain ATCC BAA-125 / DSM 18197 / FERM 7344 / JCM 9153 / C-125) (Bacillus halodurans).